Consider the following 1234-residue polypeptide: MVHPVQVGKRTRMSFAKVKDVAEMPNLIEIQLDSYKWFLDAGLYEVFDDINPISNFTGNLVLEFVGYTLDMDNIKYSVEECKERDTTYAAPLKVAVRLQNKETGEIKEQEVFMGDFPLMTEQGTFIINGAERVIVSQLVRSPGVYYNYNVDKTGKKLFSATVIPNRGAWLEYETDSNDVIYVRIDKTRKLPISILGRAMGFGSDQELLEYFGEEERFKATIEKDNTKTKEEALLEIYKRLRPGEPPTVDSAISLIDSLFFDAKRYDLSRVGRYKFNKKLAIGLRIANQIAAEDIVDKLTGEVLVAKGEKISRANAEEIQNRGINSVDVLVEDRVIRIIGNHFVDIHKCVDFDISDLNIRELVHYPTLREILDNYSDEETIKEEIKKNMTRLIPKHIIKDDIFATISYQIGLAYNIGYVDDIDHLGNRRLRSVGELLQNQFRIGLSRMERVVKERMTIQDQEAITPQQLINIRPVAAAIKEFFGSSQLSQFMDQTNPLSELTHKRRLSALGPGGLSRERAGFEVRDVHHSHYGRMCPIETPEGPNIGLINSLATYAKVNEYGFIETPYRVVDKSEGRVTGEIRYFTADEEDQYLVAQANEPLDENGCFIDKKVTVRDKGEVLVVPSKDVDLMDVSPRQLVSVATAMIPFLENDDASRALMGSNMQRQAVPLLKPYAPIVGTGIEYKAAVDSGVLPKAKNAGEVVYVSANEVRVKRELDGGVDTYRLLKFKRSNQGTCINQRPIVAKGDWVLKGEVLADGPSTDLGEIALGKNIRMGFITWEGYNYEDAMLISEELVREDVFTSIHIEEYECEARDTKLGPEEITRDIPNVSEDALKDIDERGIIRIGAEVRSGDILVGKVTPKGETELTAEERLLRAIFGEKAREVRDTSLRVPHGEAGIIVDVKVFTRENGDDLSPGVNELVRCYIAQKRKISVGDKMAGRHGNKGVISRVLPEEDMPFLPDGRPLQICLNPLGVPSRMNIGQVLEVHLGWAASALGWHIATPVFDGATETDIEDCLEKAGYNRNGKTVLRDGRTGEEFDNEVTVGIMYILKLAHLVDDKIHARSTGPYSLVTQQPLGGKAQFGGQRFGEMEVWALEAYGAAHTLQEILTVKSDDVVGRVKTYEAIVKGENIPEPGVPESFKVLIKELQALCLDVKVLNDNNQEVKFKELAEDDDEIEVLEVNMEGTEDSTTEEAKEEKGEAYIPAEEIDEEIDYENIDLLDFTSDLDIEDDFN.

It belongs to the RNA polymerase beta chain family. As to quaternary structure, the RNAP catalytic core consists of 2 alpha, 1 beta, 1 beta' and 1 omega subunit. When a sigma factor is associated with the core the holoenzyme is formed, which can initiate transcription.

It catalyses the reaction RNA(n) + a ribonucleoside 5'-triphosphate = RNA(n+1) + diphosphate. Its function is as follows. DNA-dependent RNA polymerase catalyzes the transcription of DNA into RNA using the four ribonucleoside triphosphates as substrates. This Clostridium perfringens (strain SM101 / Type A) protein is DNA-directed RNA polymerase subunit beta.